A 621-amino-acid chain; its full sequence is Probable bifunctional dTTP/UTP pyrophosphatase/methyltransferase protein (621 aa).

An MAF-like region spans residues 11–223 (LHKRVVLASA…PPRPEDLRRS (213 aa)). Ser-21 bears the Phosphoserine mark. Residue Asp-88 is the Proton acceptor; for pyrophosphatase activity of the active site. Ser-228 carries the phosphoserine modification. Residue Thr-234 is modified to Phosphothreonine. The segment at 235–279 (FEDLSDVEGGGSEPTQRDAGSRDEKAEAGEAGQATAEAECHRTRE) is disordered. At Ser-239 the chain carries Phosphoserine. Residues 249–262 (TQRDAGSRDEKAEA) show a composition bias toward basic and acidic residues. The ASMT-like stretch occupies residues 277 to 621 (TRETLPPFPT…DAILATKVAP (345 aa)). Position 421 is a phosphoserine (Ser-421). S-adenosyl-L-methionine contacts are provided by residues Asp-482, 508–510 (GDF), and Arg-525.

The protein in the N-terminal section; belongs to the Maf family. YhdE subfamily. In the C-terminal section; belongs to the class I-like SAM-binding methyltransferase superfamily. Cation-independent O-methyltransferase family. Homodimer. The cofactor is a divalent metal cation. Widely expressed. In adult, highly expressed in pancreas, placenta, fibroblast, thymus, prostate, testis, ovary and colon. Expressed at lower levels in spleen, small intestine and leukocytes. In fetus, expressed at high levels in the lung and kidney and at lower level in brain and liver.

It catalyses the reaction dTTP + H2O = dTMP + diphosphate + H(+). It carries out the reaction UTP + H2O = UMP + diphosphate + H(+). The catalysed reaction is CTP + H2O = CMP + diphosphate + H(+). The enzyme catalyses psi-UTP + H2O = psi-UMP + diphosphate + H(+). It catalyses the reaction 5-methyl-UTP + H2O = 5-methyl-UMP + diphosphate + H(+). It carries out the reaction 5-methyl-CTP + H2O = 5-methyl-CMP + diphosphate + H(+). In terms of biological role, nucleoside triphosphate pyrophosphatase that hydrolyzes dTTP and UTP. Can also hydrolyze CTP and the modified nucleotides pseudo-UTP, 5-methyl-UTP (m(5)UTP) and 5-methyl-CTP (m(5)CTP). Has weak activity with dCTP, 8-oxo-GTP and N(4)-methyl-dCTP. May have a dual role in cell division arrest and in preventing the incorporation of modified nucleotides into cellular nucleic acids. In addition, the presence of the putative catalytic domain of S-adenosyl-L-methionine binding in the C-terminal region argues for a methyltransferase activity. The chain is Probable bifunctional dTTP/UTP pyrophosphatase/methyltransferase protein (ASMTL) from Homo sapiens (Human).